The following is a 113-amino-acid chain: Endoribonuclease SymE (113 aa).

One can recognise a SpoVT-AbrB domain in the interval 29–74 (GRYPDYSRIPAITLKGQWLEVAGFATGTAVDVKVMEGCIVLTAQPP).

This sequence belongs to the SymE family.

Its subcellular location is the cytoplasm. Its function is as follows. Involved in the degradation and recycling of damaged RNA. It is itself a target for degradation by the ATP-dependent protease Lon. The protein is Endoribonuclease SymE of Escherichia coli O7:K1 (strain IAI39 / ExPEC).